Here is a 286-residue protein sequence, read N- to C-terminus: 33 kDa chaperonin (286 aa).

2 disulfide bridges follow: Cys-225-Cys-227 and Cys-258-Cys-261.

It belongs to the HSP33 family. Post-translationally, under oxidizing conditions two disulfide bonds are formed involving the reactive cysteines. Under reducing conditions zinc is bound to the reactive cysteines and the protein is inactive.

Its subcellular location is the cytoplasm. Functionally, redox regulated molecular chaperone. Protects both thermally unfolding and oxidatively damaged proteins from irreversible aggregation. Plays an important role in the bacterial defense system toward oxidative stress. The chain is 33 kDa chaperonin from Shewanella oneidensis (strain ATCC 700550 / JCM 31522 / CIP 106686 / LMG 19005 / NCIMB 14063 / MR-1).